A 226-amino-acid chain; its full sequence is Thiamine-phosphate synthase (226 aa).

4-amino-2-methyl-5-(diphosphooxymethyl)pyrimidine contacts are provided by residues 46-50 and Asp83; that span reads QFRDK. Mg(2+) is bound by residues Asp84 and Asp103. Ser122 contacts 4-amino-2-methyl-5-(diphosphooxymethyl)pyrimidine. Residue 149 to 151 participates in 2-[(2R,5Z)-2-carboxy-4-methylthiazol-5(2H)-ylidene]ethyl phosphate binding; it reads TQS. Lys152 contributes to the 4-amino-2-methyl-5-(diphosphooxymethyl)pyrimidine binding site. 2-[(2R,5Z)-2-carboxy-4-methylthiazol-5(2H)-ylidene]ethyl phosphate-binding positions include Gly181 and 201 to 202; that span reads IT.

This sequence belongs to the thiamine-phosphate synthase family. The cofactor is Mg(2+).

It carries out the reaction 2-[(2R,5Z)-2-carboxy-4-methylthiazol-5(2H)-ylidene]ethyl phosphate + 4-amino-2-methyl-5-(diphosphooxymethyl)pyrimidine + 2 H(+) = thiamine phosphate + CO2 + diphosphate. It catalyses the reaction 2-(2-carboxy-4-methylthiazol-5-yl)ethyl phosphate + 4-amino-2-methyl-5-(diphosphooxymethyl)pyrimidine + 2 H(+) = thiamine phosphate + CO2 + diphosphate. The catalysed reaction is 4-methyl-5-(2-phosphooxyethyl)-thiazole + 4-amino-2-methyl-5-(diphosphooxymethyl)pyrimidine + H(+) = thiamine phosphate + diphosphate. Its pathway is cofactor biosynthesis; thiamine diphosphate biosynthesis; thiamine phosphate from 4-amino-2-methyl-5-diphosphomethylpyrimidine and 4-methyl-5-(2-phosphoethyl)-thiazole: step 1/1. Condenses 4-methyl-5-(beta-hydroxyethyl)thiazole monophosphate (THZ-P) and 2-methyl-4-amino-5-hydroxymethyl pyrimidine pyrophosphate (HMP-PP) to form thiamine monophosphate (TMP). This chain is Thiamine-phosphate synthase, found in Haemophilus influenzae (strain 86-028NP).